Reading from the N-terminus, the 1631-residue chain is Ras GTPase-activating-like protein IQGAP3 (1631 aa).

Positions 34-149 (LCRLEEAKRW…YCIHALSLFL (116 aa)) constitute a Calponin-homology (CH) domain. A Phosphotyrosine modification is found at Y162. Position 539 is a phosphoserine (S539). 4 IQ domains span residues 730–759 (NVGF…FLRT), 760–789 (WLPA…YFKA), 790–819 (NLDA…YFQK), and 820–849 (NVNS…APHP). The region spanning 1004–1253 (YLLLQLFKTA…LKFRKFIHRA (250 aa)) is the Ras-GAP domain. S1424 carries the phosphoserine modification.

The chain is Ras GTPase-activating-like protein IQGAP3 (IQGAP3) from Homo sapiens (Human).